Reading from the N-terminus, the 526-residue chain is Outer capsid protein VP5 (526 aa).

Residues 1-42 are involved in membrane permeabilization; sequence MGKIIKSLSRFGKKVGNALTSNTAKKIYNTIGKAAERFAESE.

This sequence belongs to the orbivirus VP5 family.

The protein localises to the virion. Functionally, VP5 protein is one of the two proteins (with VP2) which constitute the virus particle outer capsid. Acts as a membrane permeabilization protein that mediates release of viral particles from endosomal compartments into the cytoplasm. Permeabilization activity is probably negatively regulated by VP2 and is triggered by endosomal degradation of VP2 and exposure to low pH. The protein is Outer capsid protein VP5 (Segment-6) of Bluetongue virus 13 (isolate USA) (BTV 13).